A 162-amino-acid chain; its full sequence is Putative ankyrin repeat protein R664 (162 aa).

ANK repeat units follow at residues 10–40, 47–78, and 82–111; these read KKLV…NVNY, NDTP…DVNY, and YHET…NPYL.

In Acanthamoeba polyphaga mimivirus (APMV), this protein is Putative ankyrin repeat protein R664.